Reading from the N-terminus, the 89-residue chain is VPTQRLCGSHLVDALYFVCGERGFFYSPKQIRDVGPLSAFRDLEPPLDTEMEDRFPYRQQLAGSKMKRGIVEQCCHNTCSLVNLEGYCN.

3 disulfides stabilise this stretch: Cys-7–Cys-75, Cys-19–Cys-88, and Cys-74–Cys-79. The propeptide at 33-66 is c peptide; that stretch reads DVGPLSAFRDLEPPLDTEMEDRFPYRQQLAGSKM.

Belongs to the insulin family. Heterodimer of a B chain and an A chain linked by two disulfide bonds.

The protein localises to the secreted. Functionally, insulin decreases blood glucose concentration. It increases cell permeability to monosaccharides, amino acids and fatty acids. It accelerates glycolysis, the pentose phosphate cycle, and glycogen synthesis in liver. This is Insulin (ins) from Callorhinchus milii (Ghost shark).